The primary structure comprises 216 residues: ATP-dependent dethiobiotin synthetase BioD (216 aa).

12-17 (NVGKTF) is a binding site for ATP. Thr16 is a Mg(2+) binding site. Residue Lys36 is part of the active site. Ser40 serves as a coordination point for substrate. Residues Asp53, 110–113 (EGAG), and 170–171 (NQ) contribute to the ATP site. 2 residues coordinate Mg(2+): Asp53 and Glu110.

It belongs to the dethiobiotin synthetase family. As to quaternary structure, homodimer. Requires Mg(2+) as cofactor.

It is found in the cytoplasm. It catalyses the reaction (7R,8S)-7,8-diammoniononanoate + CO2 + ATP = (4R,5S)-dethiobiotin + ADP + phosphate + 3 H(+). It functions in the pathway cofactor biosynthesis; biotin biosynthesis; biotin from 7,8-diaminononanoate: step 1/2. Its function is as follows. Catalyzes a mechanistically unusual reaction, the ATP-dependent insertion of CO2 between the N7 and N8 nitrogen atoms of 7,8-diaminopelargonic acid (DAPA, also called 7,8-diammoniononanoate) to form a ureido ring. In Vesicomyosocius okutanii subsp. Calyptogena okutanii (strain HA), this protein is ATP-dependent dethiobiotin synthetase BioD.